The primary structure comprises 211 residues: Arginine exporter protein ArgO (211 aa).

The next 6 membrane-spanning stretches (helical) occupy residues 1-21, 37-57, 68-88, 111-131, 147-167, and 179-199; these read MISY…PLGP, LMIA…GIFG, LLAL…FGAL, IIAT…DTFV, WFAL…ALLA, and AQRI…FQLA.

The protein belongs to the LysE/ArgO transporter (TC 2.A.75) family.

It localises to the cell inner membrane. It catalyses the reaction L-arginine(in) = L-arginine(out). Its function is as follows. Involved in the export of arginine. Important to control the intracellular level of arginine and the correct balance between arginine and lysine. The sequence is that of Arginine exporter protein ArgO from Salmonella paratyphi A (strain ATCC 9150 / SARB42).